The following is a 327-amino-acid chain: Aquaporin-1 (327 aa).

Positions 1–34 are disordered; the sequence is MSSNDSNDTDKQHTRLDPTGVDDAYIPPEQPETK. The Cytoplasmic portion of the chain corresponds to 1–48; that stretch reads MSSNDSNDTDKQHTRLDPTGVDDAYIPPEQPETKHHRFKISKDTLRNH. The chain crosses the membrane as a helical span at residues 49–69; that stretch reads FIAAAGEFCGTFMFLWCAYVI. Residues 70–91 lie on the Extracellular side of the membrane; it reads CNVANHDVALVAAPDGSHPGQL. The helical transmembrane segment at 92-112 threads the bilayer; the sequence is IMIAIGFGFSVMFSIWCFAGV. Residues 113–136 are Cytoplasmic-facing; sequence SGGALNPAVSLSLCLARAVSPTRC. Residues 118 to 120 carry the NPA 1 motif; the sequence is NPA. Residues 137 to 157 form a helical membrane-spanning segment; that stretch reads VVMWVSQIVAGMAAGGAASAM. The Extracellular portion of the chain corresponds to 158 to 176; sequence TPGEVLFANSLGLGCSRTR. The helical transmembrane segment at 177–197 threads the bilayer; sequence GLFLEMFGTAILCLTVLMTAV. Residues 198–203 lie on the Cytoplasmic side of the membrane; it reads EKRETN. Residues 204 to 224 traverse the membrane as a helical segment; the sequence is FMAALPIGISLFIAHVALTAY. At 225 to 248 the chain is on the extracellular side; it reads TGTGVNPARSLGAAVAARYFPHYH. Residues 230–232 carry the NPA 2 motif; it reads NPA. A helical transmembrane segment spans residues 249 to 269; the sequence is WIYWIGPLLGSILAWSVWQLL. The Cytoplasmic portion of the chain corresponds to 270–327; that stretch reads QILDYTTYVTAEKAASTKEKAQKKVKPAVPLLWLKSNFSLLFFISRSLALNVIIFGKN.

This sequence belongs to the MIP/aquaporin (TC 1.A.8) family.

It localises to the endoplasmic reticulum membrane. The protein localises to the cell membrane. Functionally, water channel required to facilitate the transport of water across membranes. Involved in sporulation, freeze tolerance and osmotolerance. Is non-functional in most laboratory strains. This chain is Aquaporin-1 (AQY1), found in Saccharomyces cerevisiae (strain Lalvin EC1118 / Prise de mousse) (Baker's yeast).